The primary structure comprises 280 residues: Phosphatidylserine decarboxylase proenzyme (280 aa).

Residues D88, H144, and S247 each act as charge relay system; for autoendoproteolytic cleavage activity in the active site. Residue S247 is the Schiff-base intermediate with substrate; via pyruvic acid; for decarboxylase activity of the active site. S247 carries the pyruvic acid (Ser); by autocatalysis modification.

The protein belongs to the phosphatidylserine decarboxylase family. PSD-B subfamily. Prokaryotic type I sub-subfamily. Heterodimer of a large membrane-associated beta subunit and a small pyruvoyl-containing alpha subunit. Requires pyruvate as cofactor. Is synthesized initially as an inactive proenzyme. Formation of the active enzyme involves a self-maturation process in which the active site pyruvoyl group is generated from an internal serine residue via an autocatalytic post-translational modification. Two non-identical subunits are generated from the proenzyme in this reaction, and the pyruvate is formed at the N-terminus of the alpha chain, which is derived from the carboxyl end of the proenzyme. The autoendoproteolytic cleavage occurs by a canonical serine protease mechanism, in which the side chain hydroxyl group of the serine supplies its oxygen atom to form the C-terminus of the beta chain, while the remainder of the serine residue undergoes an oxidative deamination to produce ammonia and the pyruvoyl prosthetic group on the alpha chain. During this reaction, the Ser that is part of the protease active site of the proenzyme becomes the pyruvoyl prosthetic group, which constitutes an essential element of the active site of the mature decarboxylase.

The protein localises to the cell membrane. It catalyses the reaction a 1,2-diacyl-sn-glycero-3-phospho-L-serine + H(+) = a 1,2-diacyl-sn-glycero-3-phosphoethanolamine + CO2. The protein operates within phospholipid metabolism; phosphatidylethanolamine biosynthesis; phosphatidylethanolamine from CDP-diacylglycerol: step 2/2. Its function is as follows. Catalyzes the formation of phosphatidylethanolamine (PtdEtn) from phosphatidylserine (PtdSer). The protein is Phosphatidylserine decarboxylase proenzyme of Xanthomonas euvesicatoria pv. vesicatoria (strain 85-10) (Xanthomonas campestris pv. vesicatoria).